The chain runs to 380 residues: Cytochrome b (380 aa).

4 consecutive transmembrane segments (helical) span residues phenylalanine 34–threonine 54, tryptophan 78–isoleucine 99, tryptophan 114–leucine 134, and phenylalanine 179–threonine 199. Histidine 84 and histidine 98 together coordinate heme b. 2 residues coordinate heme b: histidine 183 and histidine 197. Residue histidine 202 participates in a ubiquinone binding. 4 helical membrane-spanning segments follow: residues leucine 227 to serine 247, leucine 289 to histidine 309, leucine 321 to serine 341, and phenylalanine 348 to proline 368.

Belongs to the cytochrome b family. The cytochrome bc1 complex contains 11 subunits: 3 respiratory subunits (MT-CYB, CYC1 and UQCRFS1), 2 core proteins (UQCRC1 and UQCRC2) and 6 low-molecular weight proteins (UQCRH/QCR6, UQCRB/QCR7, UQCRQ/QCR8, UQCR10/QCR9, UQCR11/QCR10 and a cleavage product of UQCRFS1). This cytochrome bc1 complex then forms a dimer. Heme b is required as a cofactor.

It localises to the mitochondrion inner membrane. Component of the ubiquinol-cytochrome c reductase complex (complex III or cytochrome b-c1 complex) that is part of the mitochondrial respiratory chain. The b-c1 complex mediates electron transfer from ubiquinol to cytochrome c. Contributes to the generation of a proton gradient across the mitochondrial membrane that is then used for ATP synthesis. This is Cytochrome b (MT-CYB) from Uria aalge (Common mure).